Reading from the N-terminus, the 364-residue chain is Fructose-bisphosphate aldolase A (364 aa).

At Tyr-5 the chain carries Phosphotyrosine. Thr-9 carries the phosphothreonine modification. Phosphoserine occurs at positions 36 and 39. An N6-acetyllysine; alternate modification is found at Lys-42. Residue Lys-42 forms a Glycyl lysine isopeptide (Lys-Gly) (interchain with G-Cter in SUMO1); alternate linkage. Residue Lys-42 forms a Glycyl lysine isopeptide (Lys-Gly) (interchain with G-Cter in SUMO2); alternate linkage. A beta-D-fructose 1,6-bisphosphate-binding site is contributed by Arg-43. Ser-46 is modified (phosphoserine). At Lys-99 the chain carries N6-(2-hydroxyisobutyryl)lysine. N6-acetyllysine is present on Lys-108. N6-acetyllysine; alternate is present on Lys-111. Lys-111 bears the N6-malonyllysine; alternate mark. Phosphoserine is present on Ser-132. At Lys-147 the chain carries N6-(2-hydroxyisobutyryl)lysine. Glu-188 functions as the Proton acceptor in the catalytic mechanism. Residue Lys-230 is the Schiff-base intermediate with dihydroxyacetone-P of the active site. A Phosphoserine modification is found at Ser-272. Residues Ser-272 to Gly-274, Ser-301, and Arg-304 each bind beta-D-fructose 1,6-bisphosphate. Position 312 is an N6-malonyllysine (Lys-312). Lys-330 bears the N6-acetyllysine mark.

The protein belongs to the class I fructose-bisphosphate aldolase family. In terms of assembly, homotetramer. Interacts with SNX9 and WAS. Interacts with FBP2; the interaction blocks FBP2 inhibition by physiological concentrations of AMP and reduces inhibition by Ca(2+). In terms of tissue distribution, expressed in muscle, brain and hepatoma cells.

Its subcellular location is the cytoplasm. It localises to the myofibril. The protein localises to the sarcomere. The protein resides in the i band. It is found in the m line. The enzyme catalyses beta-D-fructose 1,6-bisphosphate = D-glyceraldehyde 3-phosphate + dihydroxyacetone phosphate. It functions in the pathway carbohydrate degradation; glycolysis; D-glyceraldehyde 3-phosphate and glycerone phosphate from D-glucose: step 4/4. In terms of biological role, catalyzes the reversible conversion of beta-D-fructose 1,6-bisphosphate (FBP) into two triose phosphate and plays a key role in glycolysis and gluconeogenesis. In addition, may also function as scaffolding protein. In Rattus norvegicus (Rat), this protein is Fructose-bisphosphate aldolase A (Aldoa).